The chain runs to 431 residues: Histidine--tRNA ligase (431 aa).

Residues 1–20 form a disordered region; sequence MALQRPKGTQDHLPDGSPKL.

It belongs to the class-II aminoacyl-tRNA synthetase family. Homodimer.

It is found in the cytoplasm. It carries out the reaction tRNA(His) + L-histidine + ATP = L-histidyl-tRNA(His) + AMP + diphosphate + H(+). In Deinococcus geothermalis (strain DSM 11300 / CIP 105573 / AG-3a), this protein is Histidine--tRNA ligase.